A 140-amino-acid polypeptide reads, in one-letter code: MLKTISPLISPTLLKVLAEMGHGDEIIFSDAHFPAQSLGPQVIRADGLSVSDLLRAIIPLFELDNYAPPLVMMAAVEGDTLDPAVEARYRDALSLEAPCPDIVRIDRYAFYERAQKAFAIVITGECAKYGNILLKKGVTP.

The active-site Proton donor is the H22. Substrate contacts are provided by residues D30, R107, and 129-131 (YGN).

The protein belongs to the RbsD / FucU family. FucU mutarotase subfamily. As to quaternary structure, homodecamer.

It localises to the cytoplasm. It carries out the reaction alpha-L-fucose = beta-L-fucose. The protein operates within carbohydrate metabolism; L-fucose metabolism. Involved in the anomeric conversion of L-fucose. This chain is L-fucose mutarotase, found in Salmonella arizonae (strain ATCC BAA-731 / CDC346-86 / RSK2980).